The sequence spans 1167 residues: Rhoptry neck protein 2-like protein 2 (1167 aa).

The first 20 residues, 1–20, serve as a signal peptide directing secretion; sequence MSSNLAFLSLSLAESTASLG. The Cytoplasmic segment spans residues 21–977; that stretch reads KSLEETRTRL…WVAKRSRSRK (957 aa). Residues 55–94 are disordered; that stretch reads GPGLSVEGKQTEQMSRKSAEDTRASSLSSDPDDGRAAQLA. Positions 68–77 are enriched in basic and acidic residues; that stretch reads MSRKSAEDTR. A helical transmembrane segment spans residues 978-998; sequence LAIVSVLSLGLIFAYTLLSAL. Residues 999 to 1167 are Extracellular-facing; the sequence is DIAQFLTDSG…TPQRAQDGSR (169 aa). Cys-1015 and Cys-1026 are joined by a disulfide.

It belongs to the apicomplexan parasites RON2 family.

It localises to the secreted. The protein resides in the host cell membrane. Its function is as follows. May play a role in host cell invasion. The chain is Rhoptry neck protein 2-like protein 2 (RON2L2) from Toxoplasma gondii (strain ATCC 50611 / Me49).